A 181-amino-acid chain; its full sequence is Large ribosomal subunit protein uL5 (181 aa).

It belongs to the universal ribosomal protein uL5 family. As to quaternary structure, part of the 50S ribosomal subunit; part of the 5S rRNA/L5/L18/L25 subcomplex. Contacts the 5S rRNA and the P site tRNA. Forms a bridge to the 30S subunit in the 70S ribosome.

In terms of biological role, this is one of the proteins that bind and probably mediate the attachment of the 5S RNA into the large ribosomal subunit, where it forms part of the central protuberance. In the 70S ribosome it contacts protein S13 of the 30S subunit (bridge B1b), connecting the 2 subunits; this bridge is implicated in subunit movement. Contacts the P site tRNA; the 5S rRNA and some of its associated proteins might help stabilize positioning of ribosome-bound tRNAs. The protein is Large ribosomal subunit protein uL5 of Mesomycoplasma hyopneumoniae (strain 7448) (Mycoplasma hyopneumoniae).